A 269-amino-acid chain; its full sequence is Energy-coupling factor transporter ATP-binding protein EcfA1 (269 aa).

The ABC transporter domain occupies 8-242 (IVFKNVSFQY…AEELTTIGLD (235 aa)). 42-49 (GHNGSGKS) contributes to the ATP binding site.

It belongs to the ABC transporter superfamily. Energy-coupling factor EcfA family. Forms a stable energy-coupling factor (ECF) transporter complex composed of 2 membrane-embedded substrate-binding proteins (S component), 2 ATP-binding proteins (A component) and 2 transmembrane proteins (T component).

The protein resides in the cell membrane. Its function is as follows. ATP-binding (A) component of a common energy-coupling factor (ECF) ABC-transporter complex. Unlike classic ABC transporters this ECF transporter provides the energy necessary to transport a number of different substrates. The chain is Energy-coupling factor transporter ATP-binding protein EcfA1 from Staphylococcus aureus (strain MRSA252).